The chain runs to 317 residues: Testis-expressed protein 19.2 (317 aa).

Residues 64 to 75 (MELSEASSEPEE) show a composition bias toward acidic residues. A disordered region spans residues 64–113 (MELSEASSEPEEWPGLSGGEGQGHLPHGISVSAGSGAQGPQPVPTELGPQ). Residues 101 to 145 (QGPQPVPTELGPQEAVPLDLGPEDAEWTQALPWRFDGLSPCSHWL) form an important for interaction with piRNA region.

Interacts with UBR2. Interacts with piRNA-associated proteins DDX4, EDC4, MAEL, PIWIL1, PIWIL2, RANBP9 and TDRD6. Specifically expressed in somatic cells of male gonad lineage.

The protein resides in the cytoplasm. In terms of biological role, may be required during spermatogenesis, probably by participating in the repression of retrotransposable elements and prevent their mobilization. With its paralog, Tex19.1, collaborates with the Piwi-interacting RNA (piRNA) pathway, which mediates the repression of transposable elements during meiosis by forming complexes composed of piRNAs and Piwi proteins. Interacts with Piwi proteins and directly binds piRNAs, a class of 24 to 30 nucleotide RNAs that are generated by a Dicer-independent mechanism and are primarily derived from transposons and other repeated sequence elements. The polypeptide is Testis-expressed protein 19.2 (Tex19.2) (Mus musculus (Mouse)).